A 777-amino-acid chain; its full sequence is Transcriptional regulator QRICH1 (777 aa).

Met1 carries the N-acetylmethionine modification. The CARD domain maps to 6 to 48; it reads ENTISFEEYIRVKARSVPQHRMKEFLDSLASKGPEALQEFQQT. Disordered regions lie at residues 140-164 and 219-240; these read IQGQAPQSAAPSIQTPSLQSPSPSQ and ALSPPPSQQGSPREGERRVGTA. Phosphoserine is present on Ser346. Residues Lys354 and Lys359 each participate in a glycyl lysine isopeptide (Lys-Gly) (interchain with G-Cter in SUMO2) cross-link. The interval 420 to 440 is disordered; the sequence is QQQPQQQTAQEQTPPPQQQQQ. Ser465 is subject to Phosphoserine.

In terms of tissue distribution, expressed highly in prefrontal cortex, craniofacial area and near the limbs of mouse embryos. Expressed in heart, skeletal muscle, liver, kidney, lung, brain, spleen, intestine and growth plate in mice.

It localises to the nucleus. It is found in the cytoplasm. The protein localises to the cell membrane. Its function is as follows. Transcriptional regulator that acts as a mediator of the integrated stress response (ISR) through transcriptional control of protein homeostasis under conditions of ER stress. Controls the outcome of the unfolded protein response (UPR), an ER-stress response pathway that either promotes recovery of ER homeostasis and cell survival, or triggers the terminal UPR which elicits programmed cell death when ER stress is prolonged and unresolved. ER stress induces QRICH1 translation by a ribosome translation re-initiation mechanism in response to EIF2S1/eIF-2-alpha phosphorylation, and stress-induced QRICH1 regulates a transcriptional program associated with protein translation, protein secretion-mediated proteotoxicity and cell death during the terminal UPR. May cooperate with ATF4 transcription factor signaling to regulate ER homeostasis which is critical for cell viability. Up-regulates CASP3/caspase-3 activity in epithelial cells under ER stress. Central regulator of proteotoxicity associated with ER stress-mediated inflammatory diseases in the intestines and liver. Involved in chondrocyte hypertrophy, a process required for normal longitudinal bone growth. The chain is Transcriptional regulator QRICH1 from Mus musculus (Mouse).